Consider the following 189-residue polypeptide: Cytochrome bo(3) ubiquinol oxidase subunit 3 (189 aa).

The Cytoplasmic segment spans residues 1–10 (MIKETMRNNK). A helical transmembrane segment spans residues 11–31 (LFGLWIYLMSDCIIFAVLFAV). Residues 32 to 52 (YAIISSNFSTNLINHKIFNLS) are Extracellular-facing. The chain crosses the membrane as a helical span at residues 53-73 (YVFLETLILLLSSLSSGMLTI). Topologically, residues 74–81 (QKNKNNIK) are cytoplasmic. Residues 82–102 (IIYFYLLLTFFLGLSFLLMEV) traverse the membrane as a helical segment. Topologically, residues 103-122 (NEFYKLILENCSPSQHAFFS) are extracellular. A helical membrane pass occupies residues 123–143 (IFFTIVGVHGIHVFFGLIFIL). Topologically, residues 144-161 (SILYQLFYLGITNTIRIR) are cytoplasmic. Residues 162 to 182 (ILCFSLFWHFLDIIWICVFTF) traverse the membrane as a helical segment. The Extracellular portion of the chain corresponds to 183–189 (VYLNGVI).

This sequence belongs to the cytochrome c oxidase subunit 3 family. In terms of assembly, heterooctamer of two A chains, two B chains, two C chains and two D chains.

It is found in the cell membrane. In terms of biological role, cytochrome bo(3) ubiquinol terminal oxidase is the component of the aerobic respiratory chain of E.coli that predominates when cells are grown at high aeration. Has proton pump activity across the membrane in addition to electron transfer, pumping 2 protons/electron. The sequence is that of Cytochrome bo(3) ubiquinol oxidase subunit 3 (cyoC) from Buchnera aphidicola subsp. Schizaphis graminum (strain Sg).